Consider the following 244-residue polypeptide: MIRTDAKDGALVLFSGGQDSATCVAWALERYQTVETLGFDYGQRHRVELECREGVRDALKHRFPAWAGRLGDDHMIDLSVLGAISDTAMTRTIEIETTANGLPNTFVPGRNLLFMTIAAAIAYRRGLRVLVGGMCETDFSGYPDCRDDTMKALQVALNLGMDTRIVLETPLMWLDKAQTWQLAEQLGGDALVELIRVETHTCYVGERAELHDWGFGCGECPACKLRKRGYEAYLKGERVTEAPL.

14 to 24 (FSGGQDSATCV) is an ATP binding site. Zn(2+) contacts are provided by Cys-202, Cys-217, Cys-220, and Cys-223.

Belongs to the QueC family. Zn(2+) is required as a cofactor.

It carries out the reaction 7-carboxy-7-deazaguanine + NH4(+) + ATP = 7-cyano-7-deazaguanine + ADP + phosphate + H2O + H(+). It functions in the pathway purine metabolism; 7-cyano-7-deazaguanine biosynthesis. In terms of biological role, catalyzes the ATP-dependent conversion of 7-carboxy-7-deazaguanine (CDG) to 7-cyano-7-deazaguanine (preQ(0)). This is 7-cyano-7-deazaguanine synthase from Burkholderia ambifaria (strain MC40-6).